A 190-amino-acid polypeptide reads, in one-letter code: Elongation factor P-like protein (190 aa).

This sequence belongs to the elongation factor P family.

This Klebsiella pneumoniae subsp. pneumoniae (strain ATCC 700721 / MGH 78578) protein is Elongation factor P-like protein.